We begin with the raw amino-acid sequence, 603 residues long: Probable methyltransferase PMT4 (603 aa).

Topologically, residues 1–12 (MKVASVIGLRPR) are cytoplasmic. Residues 13-33 (ISGLLFLTLGVIALITILVPN) traverse the membrane as a helical; Signal-anchor for type II membrane protein segment. Residues 34-603 (SDSSSTTSTT…LVCQKPLLKK (570 aa)) are Lumenal-facing. N-linked (GlcNAc...) asparagine glycans are attached at residues Asn96 and Asn393.

The protein belongs to the methyltransferase superfamily.

The protein resides in the endoplasmic reticulum membrane. In Arabidopsis thaliana (Mouse-ear cress), this protein is Probable methyltransferase PMT4.